The primary structure comprises 965 residues: Forespore membrane adapter protein MUG56 (965 aa).

The disordered stretch occupies residues 70 to 175 (SFLMHKSTDE…VQNSNSTSTS (106 aa)). Over residues 82-101 (DTPSNLDSPSTQNVGSTNNT) the composition is skewed to polar residues. Low complexity predominate over residues 102 to 114 (RASQSLLRRSSSF). Residues 124 to 158 (THASTDNNPFSESSTLQPQTAERTSQQAVRSAITE) show a composition bias toward polar residues. Residues 159–175 (TTNPSVSVQNSNSTSTS) are compositionally biased toward low complexity. 2 PH domains span residues 562–737 (PTPV…EVAS) and 800–961 (VIRM…KEIN).

The protein belongs to the SPO71 family.

The protein localises to the cytoplasm. It is found in the nucleus. The protein resides in the prospore membrane. In terms of biological role, may recruit a lipid transfer protein to the forespore membrane during sporulation, thereby aiding forespore membrane formation. Required for meiosis. This chain is Forespore membrane adapter protein MUG56, found in Schizosaccharomyces pombe (strain 972 / ATCC 24843) (Fission yeast).